A 109-amino-acid polypeptide reads, in one-letter code: Cell division suppressor protein YneA (109 aa).

The 55-residue stretch at 40 to 94 folds into the LysM domain; the sequence is STVTITKGDTLWELSNKYHNHHHLTTNEFVKWVEDVNDLNSDTAQSLSPGDKLYI.

Belongs to the YneA family.

It localises to the cytoplasm. In terms of biological role, inhibits cell division during the SOS response. Affects a later stage of the cell division protein assembly, after the assembly of the Z ring, by probably suppressing recruitment of FtsL and/or DivIC to the division machinery. In Priestia megaterium (strain DSM 319 / IMG 1521) (Bacillus megaterium), this protein is Cell division suppressor protein YneA.